Reading from the N-terminus, the 382-residue chain is Protein delta homolog 2 (382 aa).

The signal sequence occupies residues 1–26 (MPSGCRCLNLVCLLCILGATSQPARA). 4 consecutive EGF-like domains span residues 27-58 (DDCS…LHCE), 62-89 (RMPG…KFCD), 91-129 (DEHI…RGCE), and 131-172 (KAGP…AHCE). At 27–305 (DDCSSHCDLA…RQEAGLGESS (279 aa)) the chain is on the extracellular side. Intrachain disulfides connect cysteine 29–cysteine 40, cysteine 33–cysteine 46, cysteine 48–cysteine 57, cysteine 66–cysteine 71, cysteine 79–cysteine 88, cysteine 95–cysteine 107, cysteine 101–cysteine 117, cysteine 119–cysteine 128, cysteine 135–cysteine 148, cysteine 142–cysteine 160, cysteine 162–cysteine 171, cysteine 178–cysteine 189, cysteine 183–cysteine 198, cysteine 200–cysteine 209, cysteine 216–cysteine 227, cysteine 221–cysteine 236, and cysteine 238–cysteine 247. The N-linked (GlcNAc...) asparagine glycan is linked to asparagine 157. The 37-residue stretch at 174 to 210 (NVDDCLMRPCANGATCIDGINRFSCLCPEGFAGRFCT) folds into the EGF-like 5; calcium-binding domain. An EGF-like 6; calcium-binding domain is found at 212–248 (NLDDCASRPCQRGARCRDRVHDFDCLCPSGYGGKTCE). The chain crosses the membrane as a helical span at residues 306–326 (LVALVVFGSLTAALVLATVLL). Residues 327–382 (TLRAWRRGICPTGPCCDPAPHYAPARQDQECQVSMLPAGFPLSPDLPPEPGKTTAL) lie on the Cytoplasmic side of the membrane.

The protein localises to the membrane. Regulates adipogenesis. In Rattus norvegicus (Rat), this protein is Protein delta homolog 2 (Dlk2).